Reading from the N-terminus, the 192-residue chain is Ion-translocating oxidoreductase complex subunit A (192 aa).

6 helical membrane-spanning segments follow: residues 5-25, 39-59, 65-85, 102-122, 134-154, and 171-191; these read LLLLISTVLVNNFVLVKFLGL, IGMSMATTFVLTLASILSYLV, LPFDLSYLRTMSFILVIAVVV, ALGIYLPLITTNCAVLGVALL, AIFGFGAALGFSLVLILFSAM, and AIAMITAGLMSLAFMGFTGLV.

Belongs to the NqrDE/RnfAE family. The complex is composed of six subunits: RnfA, RnfB, RnfC, RnfD, RnfE and RnfG.

It localises to the cell inner membrane. Its function is as follows. Part of a membrane-bound complex that couples electron transfer with translocation of ions across the membrane. The polypeptide is Ion-translocating oxidoreductase complex subunit A (Shewanella baltica (strain OS223)).